Reading from the N-terminus, the 984-residue chain is Probable beta-galactosidase C (984 aa).

The N-terminal stretch at 1–23 is a signal peptide; sequence MRLLSFIYLVWLALLTGTPQVSA. 5 residues coordinate substrate: tyrosine 82, asparagine 127, alanine 128, glutamate 129, and asparagine 187. Glutamate 188 functions as the Proton donor in the catalytic mechanism. The N-linked (GlcNAc...) asparagine glycan is linked to asparagine 197. Tyrosine 251 provides a ligand contact to substrate. A disulfide bridge links cysteine 257 with cysteine 304. Asparagine 276 carries an N-linked (GlcNAc...) asparagine glycan. The active-site Nucleophile is the glutamate 287. Tyrosine 353 contributes to the substrate binding site. N-linked (GlcNAc...) asparagine glycans are attached at residues asparagine 391, asparagine 421, asparagine 434, asparagine 517, asparagine 602, asparagine 677, asparagine 715, asparagine 720, asparagine 759, and asparagine 805.

The protein belongs to the glycosyl hydrolase 35 family.

The protein localises to the secreted. It carries out the reaction Hydrolysis of terminal non-reducing beta-D-galactose residues in beta-D-galactosides.. Its function is as follows. Cleaves beta-linked terminal galactosyl residues from gangliosides, glycoproteins, and glycosaminoglycans. The sequence is that of Probable beta-galactosidase C (lacC) from Aspergillus oryzae (strain ATCC 42149 / RIB 40) (Yellow koji mold).